We begin with the raw amino-acid sequence, 550 residues long: Chaperonin GroEL (550 aa).

Residues 30–33 (TLGP), Lys51, 87–91 (DGTTT), Gly414, and Asp494 contribute to the ATP site.

Belongs to the chaperonin (HSP60) family. In terms of assembly, forms a cylinder of 14 subunits composed of two heptameric rings stacked back-to-back. Interacts with the co-chaperonin GroES.

The protein resides in the cytoplasm. It catalyses the reaction ATP + H2O + a folded polypeptide = ADP + phosphate + an unfolded polypeptide.. Its function is as follows. Together with its co-chaperonin GroES, plays an essential role in assisting protein folding. The GroEL-GroES system forms a nano-cage that allows encapsulation of the non-native substrate proteins and provides a physical environment optimized to promote and accelerate protein folding. The chain is Chaperonin GroEL from Buchnera aphidicola subsp. Thelaxes suberi.